The following is a 249-amino-acid chain: Indole-3-glycerol phosphate synthase (249 aa).

This sequence belongs to the TrpC family.

The catalysed reaction is 1-(2-carboxyphenylamino)-1-deoxy-D-ribulose 5-phosphate + H(+) = (1S,2R)-1-C-(indol-3-yl)glycerol 3-phosphate + CO2 + H2O. It functions in the pathway amino-acid biosynthesis; L-tryptophan biosynthesis; L-tryptophan from chorismate: step 4/5. The polypeptide is Indole-3-glycerol phosphate synthase (Pyrobaculum aerophilum (strain ATCC 51768 / DSM 7523 / JCM 9630 / CIP 104966 / NBRC 100827 / IM2)).